The primary structure comprises 193 residues: Large ribosomal subunit protein uL5 (193 aa).

The protein belongs to the universal ribosomal protein uL5 family. Part of the 50S ribosomal subunit; part of the 5S rRNA/L5/L18/L25 subcomplex. Contacts the 5S rRNA and the P site tRNA. Forms a bridge to the 30S subunit in the 70S ribosome.

Functionally, this is one of the proteins that bind and probably mediate the attachment of the 5S RNA into the large ribosomal subunit, where it forms part of the central protuberance. In the 70S ribosome it contacts protein S13 of the 30S subunit (bridge B1b), connecting the 2 subunits; this bridge is implicated in subunit movement. Contacts the P site tRNA; the 5S rRNA and some of its associated proteins might help stabilize positioning of ribosome-bound tRNAs. The chain is Large ribosomal subunit protein uL5 from Corynebacterium urealyticum (strain ATCC 43042 / DSM 7109).